Consider the following 1756-residue polypeptide: Periplakin (1756 aa).

A Phosphoserine modification is found at Ser-14. 2 coiled-coil regions span residues 16-125 and 188-389; these read TVQT…KQIY and KEQN…QQVV. Spectrin repeat units lie at residues 216–317, 323–485, 505–612, and 733–861; these read QDYM…SHLK, HQFH…RTLQ, RQLL…EKVD, and EHFH…QNLE. Positions 399 to 455 constitute an SH3 domain; that stretch reads LKPIPVEALCDFEGEQGLISRGYSYTLQKNNGESWELMDSAGNKLIAPAVCFVIPPT. The residue at position 465 (Ser-465) is a Phosphoserine. Coiled-coil stretches lie at residues 585–820 and 886–1645; these read LLRT…GRRS and DSGV…SVAV. Residues Ser-887, Ser-949, Ser-1584, and Ser-1657 each carry the phosphoserine modification. Residues 1557–1756 are interacts with BFSP2 and VIM; that stretch reads ELDFLREENH…ELAVLVSGQK (200 aa). Plectin repeat units follow at residues 1651-1685 and 1700-1735; these read ENHL…WNMF and VKGP…PAQY.

It belongs to the plakin or cytolinker family. In terms of assembly, homodimer or a heterodimer with EVPL. Found in a complex composed of PPL (via C-terminal linker domain), BFSP1 and BFSP2 in the retinal lens. Within the complex interacts (via C-terminal linker domain) with BFSP2. Interacts with VIM. Binds to the PH domain of AKT1. Interacts with FCGR1A. May interact with PPHLN1. In terms of tissue distribution, expressed in stratified squamous epithelia and in some other epithelia.

It localises to the cell junction. The protein resides in the desmosome. It is found in the cytoplasm. Its subcellular location is the cytoskeleton. The protein localises to the cell membrane. Component of the cornified envelope of keratinocytes. May link the cornified envelope to desmosomes and intermediate filaments. May act as a localization signal in PKB/AKT-mediated signaling. The polypeptide is Periplakin (PPL) (Homo sapiens (Human)).